The sequence spans 169 residues: Small ribosomal subunit protein uS9 (169 aa).

Disordered regions lie at residues 1-29 (MVEP…TETP) and 128-169 (MDPE…YSKR). The segment covering 9–21 (DVQEYDENSEEYP) has biased composition (acidic residues). Residues 150–169 (VERKKAGLKKARKAPQYSKR) show a composition bias toward basic residues.

This sequence belongs to the universal ribosomal protein uS9 family.

This chain is Small ribosomal subunit protein uS9, found in Thermobifida fusca (strain YX).